Reading from the N-terminus, the 407-residue chain is 4-hydroxy-3-methylbut-2-en-1-yl diphosphate synthase (ferredoxin) (407 aa).

[4Fe-4S] cluster is bound by residues C316, C319, C350, and E357.

It belongs to the IspG family. Requires [4Fe-4S] cluster as cofactor.

It catalyses the reaction (2E)-4-hydroxy-3-methylbut-2-enyl diphosphate + 2 oxidized [2Fe-2S]-[ferredoxin] + H2O = 2-C-methyl-D-erythritol 2,4-cyclic diphosphate + 2 reduced [2Fe-2S]-[ferredoxin] + H(+). It participates in isoprenoid biosynthesis; isopentenyl diphosphate biosynthesis via DXP pathway; isopentenyl diphosphate from 1-deoxy-D-xylulose 5-phosphate: step 5/6. Functionally, converts 2C-methyl-D-erythritol 2,4-cyclodiphosphate (ME-2,4cPP) into 1-hydroxy-2-methyl-2-(E)-butenyl 4-diphosphate. The protein is 4-hydroxy-3-methylbut-2-en-1-yl diphosphate synthase (ferredoxin) of Cyanothece sp. (strain PCC 7425 / ATCC 29141).